Reading from the N-terminus, the 1089-residue chain is Platelet-derived growth factor receptor alpha (1089 aa).

An N-terminal signal peptide occupies residues 1–24 (MGTSHQVFLVLSCLLTGPGLISCQ). Ig-like C2-type domains follow at residues 25 to 113 (LLLP…SEIE), 117 to 201 (IYIY…FKTS), 202 to 306 (EFNV…KRVT), 319 to 410 (PTFG…FELS), and 414 to 517 (PASI…LKLV). At 25–528 (LLLPSILPNE…PTLRSELTVA (504 aa)) the chain is on the extracellular side. Asparagine 42, asparagine 76, asparagine 89, asparagine 103, and asparagine 179 each carry an N-linked (GlcNAc...) asparagine glycan. Residues cysteine 49 and cysteine 100 are joined by a disulfide bond. 2 cysteine pairs are disulfide-bonded: cysteine 150–cysteine 189 and cysteine 235–cysteine 290. N-linked (GlcNAc...) asparagine glycans are attached at residues asparagine 353, asparagine 359, asparagine 458, asparagine 468, and asparagine 506. The cysteines at positions 435 and 501 are disulfide-linked. A helical membrane pass occupies residues 529–549 (AAVLVLLVIVIVSLIVLVVIW). Residues 550–1089 (KQKPRYEIRW…SSDLVEDSFL (540 aa)) lie on the Cytoplasmic side of the membrane. 2 positions are modified to phosphotyrosine; by autocatalysis: tyrosine 572 and tyrosine 574. The Protein kinase domain maps to 593-954 (LVLGRILGSG…HLSEIVENLL (362 aa)). Residues 599–607 (LGSGAFGKV) and lysine 627 contribute to the ATP site. Phosphotyrosine; by autocatalysis occurs at positions 720, 731, 742, 754, 762, and 768. Aspartate 818 acts as the Proton acceptor in catalysis. Phosphotyrosine; by autocatalysis occurs at positions 849, 988, and 1018. The disordered stretch occupies residues 1018–1089 (YIIPLPDIDP…SSDLVEDSFL (72 aa)). A compositionally biased stretch (polar residues) spans 1041–1059 (SSQTSEESAIETGSSSSTF). Positions 1065–1089 (ETIEDIDMMDDIGIDSSDLVEDSFL) are enriched in acidic residues.

This sequence belongs to the protein kinase superfamily. Tyr protein kinase family. CSF-1/PDGF receptor subfamily. As to quaternary structure, interacts with homodimeric PDGFA, PDGFB and PDGFC, and with heterodimers formed by PDGFA and PDGFB. Monomer in the absence of bound ligand. Interaction with dimeric PDGFA, PDGFB and/or PDGFC leads to receptor dimerization, where both PDGFRA homodimers and heterodimers with PDGFRB are observed. Interacts (tyrosine phosphorylated) with SHB (via SH2 domain). Interacts (tyrosine phosphorylated) with SHF (via SH2 domain). Interacts (tyrosine phosphorylated) with SRC (via SH2 domain). Interacts (tyrosine phosphorylated) with PIK3R1. Interacts (tyrosine phosphorylated) with PLCG1 (via SH2 domain). Interacts (tyrosine phosphorylated) with CRK, GRB2 and GRB7. Interacts with CD248; this interaction promotes PDGF receptor signaling pathway. In terms of processing, ubiquitinated, leading to its internalization and degradation. Post-translationally, autophosphorylated on tyrosine residues upon ligand binding. Autophosphorylation occurs in trans, i.e. one subunit of the dimeric receptor phosphorylates tyrosine residues on the other subunit. Phosphorylation at Tyr-731 and Tyr-742 is important for interaction with PIK3R1. Phosphorylation at Tyr-720 and Tyr-754 is important for interaction with PTPN11. Phosphorylation at Tyr-762 is important for interaction with CRK. Phosphorylation at Tyr-572 and Tyr-574 is important for interaction with SRC and SRC family members. Phosphorylation at Tyr-988 and Tyr-1018 is important for interaction with PLCG1. Focally expressed in cortical interstitial cells and highly expressed in the interstitium of the papillary region. Also expressed by adventitial cells in arterial vessels. Up-regulated in areas of renal fibrosis. In mice with unilateral ureteral obstruction, expression in cortical interstitial cells becomes prominent at day 4 which increases progressively until day 14.

It localises to the cell membrane. The protein localises to the cell projection. It is found in the cilium. The protein resides in the golgi apparatus. It catalyses the reaction L-tyrosyl-[protein] + ATP = O-phospho-L-tyrosyl-[protein] + ADP + H(+). Its activity is regulated as follows. Present in an inactive conformation in the absence of bound ligand. Binding of PDGFA and/or PDGFB leads to dimerization and activation by autophosphorylation on tyrosine residues. Inhibited by imatinib, nilotinib and sorafenib. Tyrosine-protein kinase that acts as a cell-surface receptor for PDGFA, PDGFB and PDGFC and plays an essential role in the regulation of embryonic development, cell proliferation, survival and chemotaxis. Depending on the context, promotes or inhibits cell proliferation and cell migration. Plays an important role in the differentiation of bone marrow-derived mesenchymal stem cells. Required for normal skeleton development and cephalic closure during embryonic development. Required for normal development of the mucosa lining the gastrointestinal tract, and for recruitment of mesenchymal cells and normal development of intestinal villi. Plays a role in cell migration and chemotaxis in wound healing. Plays a role in platelet activation, secretion of agonists from platelet granules, and in thrombin-induced platelet aggregation. Binding of its cognate ligands - homodimeric PDGFA, homodimeric PDGFB, heterodimers formed by PDGFA and PDGFB or homodimeric PDGFC -leads to the activation of several signaling cascades; the response depends on the nature of the bound ligand and is modulated by the formation of heterodimers between PDGFRA and PDGFRB. Phosphorylates PIK3R1, PLCG1, and PTPN11. Activation of PLCG1 leads to the production of the cellular signaling molecules diacylglycerol and inositol 1,4,5-trisphosphate, mobilization of cytosolic Ca(2+) and the activation of protein kinase C. Phosphorylates PIK3R1, the regulatory subunit of phosphatidylinositol 3-kinase, and thereby mediates activation of the AKT1 signaling pathway. Mediates activation of HRAS and of the MAP kinases MAPK1/ERK2 and/or MAPK3/ERK1. Promotes activation of STAT family members STAT1, STAT3 and STAT5A and/or STAT5B. Receptor signaling is down-regulated by protein phosphatases that dephosphorylate the receptor and its down-stream effectors, and by rapid internalization of the activated receptor. The polypeptide is Platelet-derived growth factor receptor alpha (Pdgfra) (Mus musculus (Mouse)).